We begin with the raw amino-acid sequence, 86 residues long: MLVIRLARGGSKKRPFYNLVATDSRNRRDGRFVERVGFYNPVAAEGTENLRIALDRVQYWTGNGALLSPAVERLVKEYSAKVSAAA.

The protein belongs to the bacterial ribosomal protein bS16 family.

This is Small ribosomal subunit protein bS16 from Bordetella bronchiseptica (strain ATCC BAA-588 / NCTC 13252 / RB50) (Alcaligenes bronchisepticus).